We begin with the raw amino-acid sequence, 149 residues long: Large ribosomal subunit protein bL9 (149 aa).

This sequence belongs to the bacterial ribosomal protein bL9 family.

Binds to the 23S rRNA. This chain is Large ribosomal subunit protein bL9, found in Glaesserella parasuis serovar 5 (strain SH0165) (Haemophilus parasuis).